An 834-amino-acid polypeptide reads, in one-letter code: Protein Jade-1 (834 aa).

Residues 1–46 (MKRGRLPSSSEDSDDNGSLSTTWSQHSRSQHGRSSTCSRPEDRKPS) are disordered. Positions 24–35 (SQHSRSQHGRSS) are enriched in low complexity. The interaction with KAT7/HBO1 and histones stretch occupies residues 61 to 81 (DSYQLNPDDYYVLADPWRQEW). The interval 81 to 189 (WEKGVQVPVS…EQRCYDNMNH (109 aa)) is interaction with histones. Serine 90 bears the Phosphoserine mark. Threonine 93 bears the Phosphothreonine mark. Lysine 115 is covalently cross-linked (Glycyl lysine isopeptide (Lys-Gly) (interchain with G-Cter in SUMO2)). A PHD-type 1 zinc finger spans residues 204–254 (DVVCDVCQSPDGEDGNEMVFCDKCNICVHQACYGILKVPEGSWLCRTCALG). The C2HC pre-PHD-type zinc finger occupies 256-290 (QPKCLLCPKKGGAMKPTRSGTKWVHVSCALWIPEV). The PHD-type 2 zinc-finger motif lies at 314–370 (LVCSLCNEKFGASIQCSVKNCRTAFHVTCAFDRGLEMKTILAENDEVKFKSYCPKHS). A disordered region spans residues 367–409 (PKHSSHRKPEEGLGEGAAQENGAPESSPQSPLEPYGSLEPNRE). Lysine 573 participates in a covalent cross-link: Glycyl lysine isopeptide (Lys-Gly) (interchain with G-Cter in SUMO2). Disordered stretches follow at residues 589 to 621 (HPLK…CGRR) and 676 to 716 (DKSF…GTRK). Phosphoserine is present on serine 603. Residue lysine 609 is modified to N6-acetyllysine. A phosphoserine mark is found at serine 704 and serine 735. A disordered region spans residues 738-819 (KSWGGFRIPK…EKKCIHASST (82 aa)). Composition is skewed to basic and acidic residues over residues 747-768 (KKGE…HSDC) and 777-790 (PAKE…RADS).

Belongs to the JADE family. In terms of assembly, component of the HBO1 complex composed at least of ING4 or ING5, KAT7/HBO1, MEAF6, and one of JADE1, JADE2 and JADE3. Interacts with NPHP4. As to expression, highly expressed in kidney. Also present in liver (at protein level).

Its subcellular location is the nucleus. The protein resides in the chromosome. It is found in the cytoplasm. It localises to the cytoskeleton. The protein localises to the cilium basal body. Functionally, scaffold subunit of some HBO1 complexes, which have a histone H4 acetyltransferase activity. Plays a key role in HBO1 complex by directing KAT7/HBO1 specificity towards histone H4 acetylation (H4K5ac, H4K8ac and H4K12ac), regulating DNA replication initiation, regulating DNA replication initiation. May also promote acetylation of nucleosomal histone H4 by KAT5. Promotes apoptosis. May act as a renal tumor suppressor. Negatively regulates canonical Wnt signaling; at least in part, cooperates with NPHP4 in this function. This chain is Protein Jade-1 (Jade1), found in Mus musculus (Mouse).